The following is a 206-amino-acid chain: dTTP/UTP pyrophosphatase (206 aa).

The active-site Proton acceptor is Asp87.

It belongs to the Maf family. YhdE subfamily. Requires a divalent metal cation as cofactor.

It is found in the cytoplasm. The catalysed reaction is dTTP + H2O = dTMP + diphosphate + H(+). The enzyme catalyses UTP + H2O = UMP + diphosphate + H(+). Functionally, nucleoside triphosphate pyrophosphatase that hydrolyzes dTTP and UTP. May have a dual role in cell division arrest and in preventing the incorporation of modified nucleotides into cellular nucleic acids. This Aromatoleum aromaticum (strain DSM 19018 / LMG 30748 / EbN1) (Azoarcus sp. (strain EbN1)) protein is dTTP/UTP pyrophosphatase.